A 310-amino-acid polypeptide reads, in one-letter code: Ribosomal RNA small subunit methyltransferase H (310 aa).

S-adenosyl-L-methionine-binding positions include G32–H34, D52, F79, D100, and Q107.

This sequence belongs to the methyltransferase superfamily. RsmH family.

It localises to the cytoplasm. The enzyme catalyses cytidine(1402) in 16S rRNA + S-adenosyl-L-methionine = N(4)-methylcytidine(1402) in 16S rRNA + S-adenosyl-L-homocysteine + H(+). Its function is as follows. Specifically methylates the N4 position of cytidine in position 1402 (C1402) of 16S rRNA. This is Ribosomal RNA small subunit methyltransferase H from Bacillus cereus (strain G9842).